We begin with the raw amino-acid sequence, 348 residues long: Phosphate acyltransferase (348 aa).

This sequence belongs to the PlsX family. Homodimer. Probably interacts with PlsY.

The protein localises to the cytoplasm. It carries out the reaction a fatty acyl-[ACP] + phosphate = an acyl phosphate + holo-[ACP]. It functions in the pathway lipid metabolism; phospholipid metabolism. Its function is as follows. Catalyzes the reversible formation of acyl-phosphate (acyl-PO(4)) from acyl-[acyl-carrier-protein] (acyl-ACP). This enzyme utilizes acyl-ACP as fatty acyl donor, but not acyl-CoA. The chain is Phosphate acyltransferase from Rhizobium leguminosarum bv. trifolii (strain WSM2304).